Reading from the N-terminus, the 308-residue chain is Phenylcoumaran benzylic ether reductase Betv6 (308 aa).

Residues 11 to 17 (GGTGYIG), Arg36, and Lys45 contribute to the NADP(+) site. The Proton acceptor role is filled by Lys133. Residue Arg137 participates in NADP(+) binding.

Belongs to the NmrA-type oxidoreductase family. Isoflavone reductase subfamily.

It carries out the reaction (-)-dehydrodiconiferyl alcohol + NADPH + H(+) = (S)-isodihydrodehydrodiconiferyl alcohol + NADP(+). The catalysed reaction is (+)-dehydrodiconiferyl alcohol + NADPH + H(+) = (R)-isodihydrodehydrodiconiferyl alcohol + NADP(+). Oxidoreductase involved in lignan biosynthesis. Catalyzes the NADPH-dependent reduction of phenylcoumaran benzylic ethers. Converts dehydrodiconiferyl alcohol (DDC) to isodihydrodehydrodiconiferyl alcohol (IDDDC). In Betula pendula (European white birch), this protein is Phenylcoumaran benzylic ether reductase Betv6.